Consider the following 327-residue polypeptide: Beta-ketoacyl-[acyl-carrier-protein] synthase III (327 aa).

Active-site residues include C112 and H253. The tract at residues 254–258 (QANER) is ACP-binding. N283 is an active-site residue.

It belongs to the thiolase-like superfamily. FabH family. Homodimer.

The protein resides in the cytoplasm. It carries out the reaction malonyl-[ACP] + acetyl-CoA + H(+) = 3-oxobutanoyl-[ACP] + CO2 + CoA. The protein operates within lipid metabolism; fatty acid biosynthesis. Functionally, catalyzes the condensation reaction of fatty acid synthesis by the addition to an acyl acceptor of two carbons from malonyl-ACP. Catalyzes the first condensation reaction which initiates fatty acid synthesis and may therefore play a role in governing the total rate of fatty acid production. Possesses both acetoacetyl-ACP synthase and acetyl transacylase activities. Its substrate specificity determines the biosynthesis of branched-chain and/or straight-chain of fatty acids. The chain is Beta-ketoacyl-[acyl-carrier-protein] synthase III from Chlamydia muridarum (strain MoPn / Nigg).